The primary structure comprises 55 residues: Sec-independent protein translocase protein TatA (55 aa).

A helical membrane pass occupies residues 1–21 (MSLGPWQLFLVLIIILVLFGA).

It belongs to the TatA/E family. The Tat system comprises two distinct complexes: a TatABC complex, containing multiple copies of TatA, TatB and TatC subunits, and a separate TatA complex, containing only TatA subunits. Substrates initially bind to the TatABC complex, which probably triggers association of the separate TatA complex to form the active translocon.

It localises to the cell membrane. Part of the twin-arginine translocation (Tat) system that transports large folded proteins containing a characteristic twin-arginine motif in their signal peptide across membranes. TatA could form the protein-conducting channel of the Tat system. This chain is Sec-independent protein translocase protein TatA, found in Wolbachia pipientis wMel.